We begin with the raw amino-acid sequence, 218 residues long: Glutathione S-transferase class-mu 26 kDa isozyme 7 (218 aa).

One can recognise a GST N-terminal domain in the interval 2–83; that stretch reads PAKLGYWKIR…YIADKHGMLG (82 aa). Residues 7 to 8, 41 to 45, 54 to 55, and 67 to 68 contribute to the glutathione site; these read YW, WLGDK, NL, and QS. The GST C-terminal domain maps to 85–203; it reads TPEERARISM…KSERFIKWPL (119 aa). Y111 lines the substrate pocket.

The protein belongs to the GST superfamily. Mu family. Homodimer.

The enzyme catalyses RX + glutathione = an S-substituted glutathione + a halide anion + H(+). Functionally, conjugation of reduced glutathione to a wide number of exogenous and endogenous hydrophobic electrophiles. GST isoenzymes appear to play a central role in the parasite detoxification system. Other functions are also suspected including a role in increasing the solubility of haematin in the parasite gut. In Fasciola hepatica (Liver fluke), this protein is Glutathione S-transferase class-mu 26 kDa isozyme 7.